Here is a 77-residue protein sequence, read N- to C-terminus: Cell division topological specificity factor (77 aa).

Belongs to the MinE family.

Prevents the cell division inhibition by proteins MinC and MinD at internal division sites while permitting inhibition at polar sites. This ensures cell division at the proper site by restricting the formation of a division septum at the midpoint of the long axis of the cell. In Helicobacter acinonychis (strain Sheeba), this protein is Cell division topological specificity factor.